A 478-amino-acid polypeptide reads, in one-letter code: Transcript termination protein A18 (478 aa).

The 157-residue stretch at 98 to 254 (KLSTHRPMYM…NDVVNVLKVS (157 aa)) folds into the Helicase ATP-binding domain. Position 111–118 (111–118 (LSCGFGKT)) interacts with ATP. Residues 204–207 (DESH) carry the DESH box motif. Residues 302–454 (PRNNLIVDTV…IVSVSTDKLG (153 aa)) form the Helicase C-terminal domain. A disordered region spans residues 456 to 478 (QQEGKEGTKEEPALTKAFSSQIR). Basic and acidic residues predominate over residues 458–468 (EGKEGTKEEPA).

Belongs to the helicase family. Poxviruses subfamily. In terms of assembly, interacts with G2. Might be part of a transcription complex composed at least of G2, A18, and H5.

Its subcellular location is the virion. Functionally, DNA helicase which seems to act as a postreplicative transcription termination factor. Involved in ATP-dependent release of nascent RNA. Forms a stable complex with single-stranded DNA, and to a lesser extent RNA. This is Transcript termination protein A18 from Oryctolagus cuniculus (Rabbit).